We begin with the raw amino-acid sequence, 318 residues long: 2,4-dinitroanisole O-demethylase subunit beta (318 aa).

Belongs to the metallo-beta-lactamase superfamily. As to quaternary structure, part of the complex DnhAB composed of the 2,4-dinitroanisole O-demethylase alpha (DnhA) and beta (DnhB) subunits.

It catalyses the reaction 2,4-dinitroanisole + H2O = 2,4-dinitrophenol + methanol + H(+). Involved in the degradation of 2,4-dinitroanisole (DNAN), an insensitive munition ingredient used in explosive formulations as a replacement for 2,4,6-trinitrotoluene (TNT). Catalyzes the removal of the methyl group from 2,4-dinitroanisole (DNAN) to yield 2,4-dinitrophenol (2,4-DNP) and methanol. This chain is 2,4-dinitroanisole O-demethylase subunit beta, found in Nocardioides sp. (strain JS1661).